Here is a 23-residue protein sequence, read N- to C-terminus: Caerin-4.2 (23 aa).

Expressed by the skin parotoid and/or rostral glands.

It is found in the secreted. Antibacterial peptide, that adopts an alpha helical conformation which can disrupt bacterial membranes. Each caerin displays a different antimicrobial specificity. The chain is Caerin-4.2 from Ranoidea caerulea (Green tree frog).